Reading from the N-terminus, the 612-residue chain is DNA mismatch repair protein MutL (612 aa).

Belongs to the DNA mismatch repair MutL/HexB family.

In terms of biological role, this protein is involved in the repair of mismatches in DNA. It is required for dam-dependent methyl-directed DNA mismatch repair. May act as a 'molecular matchmaker', a protein that promotes the formation of a stable complex between two or more DNA-binding proteins in an ATP-dependent manner without itself being part of a final effector complex. This is DNA mismatch repair protein MutL from Bartonella quintana (strain Toulouse) (Rochalimaea quintana).